The chain runs to 393 residues: S-adenosylmethionine synthase 1 (393 aa).

A Mg(2+)-binding site is contributed by Glu9. Residue His15 coordinates ATP. Residue Glu43 coordinates K(+). The L-methionine site is built by Glu56 and Gln99. Residues Asp167 to Lys169, Ser235 to Phe238, Asp246, Arg252 to Lys253, Ala269, Lys273, and Lys277 each bind ATP. An L-methionine-binding site is contributed by Asp246. Residue Lys277 coordinates L-methionine.

It belongs to the AdoMet synthase family. Homotetramer. Requires Mn(2+) as cofactor. Mg(2+) serves as cofactor. Co(2+) is required as a cofactor. The cofactor is K(+). Mostly expressed in stems.

It is found in the cytoplasm. The enzyme catalyses L-methionine + ATP + H2O = S-adenosyl-L-methionine + phosphate + diphosphate. It functions in the pathway amino-acid biosynthesis; S-adenosyl-L-methionine biosynthesis; S-adenosyl-L-methionine from L-methionine: step 1/1. Functionally, catalyzes the formation of S-adenosylmethionine from methionine and ATP. The reaction comprises two steps that are both catalyzed by the same enzyme: formation of S-adenosylmethionine (AdoMet) and triphosphate, and subsequent hydrolysis of the triphosphate. The sequence is that of S-adenosylmethionine synthase 1 (SAM1) from Solanum lycopersicum (Tomato).